We begin with the raw amino-acid sequence, 498 residues long: Glycerol kinase (498 aa).

Threonine 12 is an ADP binding site. The ATP site is built by threonine 12, threonine 13, and serine 14. A sn-glycerol 3-phosphate-binding site is contributed by threonine 12. Arginine 16 serves as a coordination point for ADP. Residues arginine 82, glutamate 83, tyrosine 134, and aspartate 244 each coordinate sn-glycerol 3-phosphate. Glycerol contacts are provided by arginine 82, glutamate 83, tyrosine 134, aspartate 244, and glutamine 245. ADP-binding residues include threonine 266 and glycine 309. ATP-binding residues include threonine 266, glycine 309, glutamine 313, and glycine 410. Glycine 410 and asparagine 414 together coordinate ADP.

Belongs to the FGGY kinase family. As to quaternary structure, homotetramer and homodimer (in equilibrium).

The catalysed reaction is glycerol + ATP = sn-glycerol 3-phosphate + ADP + H(+). The protein operates within polyol metabolism; glycerol degradation via glycerol kinase pathway; sn-glycerol 3-phosphate from glycerol: step 1/1. With respect to regulation, activated by phosphorylation and inhibited by fructose 1,6-bisphosphate (FBP). Its function is as follows. Key enzyme in the regulation of glycerol uptake and metabolism. Catalyzes the phosphorylation of glycerol to yield sn-glycerol 3-phosphate. The sequence is that of Glycerol kinase from Natranaerobius thermophilus (strain ATCC BAA-1301 / DSM 18059 / JW/NM-WN-LF).